The sequence spans 418 residues: MQHKRSRALASPRSPFLFALLALAVGGTANAHDDGLPAFRYSAELLGQLQLPSVALPLNDELFLYGRDAEAFDLEAYLALNAPALRDKSEYLEHWSGYYSINPKVLLTLMVMQSGPLGAPDERALAAPLGRLSAKRGFDAQVRDVLQQLSRRYYGFEEYQLRQAAARKAVGEDGLNAASAALLGLLREGAKASAVQGGNPLGAYAQTFQRLFGTPAAELLQPRNRVARQLQAKAALAPPSNLMQLPWRQGYSWQPNGAHSNTGSGYPYSSFDASYDWPRWGSATYSVVAAHAGTVRVLSRCQVRVTHPSGWATNYYHMDQIQVSNGQQVSADTKLGVYASNINTALCEGGSSTGPHLHFSLLYNGAFVSLQGASFGPYRINVGTSNYDNDCRRYYFYNQSAGTTHCAFRPLYNPGLAL.

Positions 1 to 31 (MQHKRSRALASPRSPFLFALLALAVGGTANA) are cleaved as a signal peptide. Residues 32-236 (HDDGLPAFRY…ARQLQAKAAL (205 aa)) constitute a propeptide that is removed on maturation. Residues histidine 259 and aspartate 272 each contribute to the Zn(2+) site. A disulfide bridge links cysteine 301 with cysteine 347. Residues histidine 317 and histidine 356 each act as proton donor/acceptor in the active site. Zn(2+) is bound at residue histidine 358. Cysteine 391 and cysteine 406 are disulfide-bonded.

Belongs to the peptidase M23A family. The cofactor is Zn(2+).

It localises to the secreted. Functionally, involved in proteolysis and elastolysis (degradation of the host protein elastin). Has staphylolytic activity (degrades pentaglycine cross-links in cell wall peptidoglycan), preferring Gly-Gly-|-X substrates where X is Ala or Gly. Enhances the elastolytic but not proteolytic activity of elastase (lasB) and elastolytic activity of other proteases. Degradation of elastin is likely to contribute to the pathogenicity of P.aeruginosa. This is Protease LasA (lasA) from Pseudomonas aeruginosa (strain UCBPP-PA14).